Consider the following 448-residue polypeptide: Cysteine--tRNA ligase (448 aa).

Cys29 serves as a coordination point for Zn(2+). The 'HIGH' region signature appears at 31 to 41 (PTVYDTAHIGN). The span at 79–91 (ATTGADRGADQAH) shows a compositional bias: basic and acidic residues. Positions 79–106 (ATTGADRGADQAHRGPLPRRHGPLNAAP) are disordered. Zn(2+)-binding residues include Cys206 and Glu235. Positions 265–269 (RMSKS) match the 'KMSKS' region motif. Lys268 is an ATP binding site.

It belongs to the class-I aminoacyl-tRNA synthetase family. As to quaternary structure, monomer. The cofactor is Zn(2+).

The protein resides in the cytoplasm. It carries out the reaction tRNA(Cys) + L-cysteine + ATP = L-cysteinyl-tRNA(Cys) + AMP + diphosphate. The sequence is that of Cysteine--tRNA ligase (cysS) from Azospirillum brasilense.